Here is a 422-residue protein sequence, read N- to C-terminus: Synaptotagmin-15 (422 aa).

The Extracellular portion of the chain corresponds to 1 to 4 (MAEQ). Residues 5-27 (LALVIGCIIGGLLLLIGISCCLW) form a helical; Signal-anchor for type III membrane protein membrane-spanning segment. Residues 28–422 (KRLCTTFTYE…WHALCRPMEP (395 aa)) are Cytoplasmic-facing. 2 consecutive C2 domains span residues 148 to 267 (CLGR…VIWR) and 279 to 400 (EFGD…EHWN).

It belongs to the synaptotagmin family. As to quaternary structure, homodimer.

It is found in the membrane. May be involved in the trafficking and exocytosis of secretory vesicles in non-neuronal tissues. The sequence is that of Synaptotagmin-15 (Syt15) from Rattus norvegicus (Rat).